The following is a 331-amino-acid chain: Glutamyl-tRNA reductase (331 aa).

Substrate is bound by residues threonine 49–arginine 52, serine 107, glutamate 112–glutamine 114, and glutamine 118. Residue cysteine 50 is the Nucleophile of the active site. Glycine 184–glycine 189 lines the NADP(+) pocket.

The protein belongs to the glutamyl-tRNA reductase family. Homodimer.

It carries out the reaction (S)-4-amino-5-oxopentanoate + tRNA(Glu) + NADP(+) = L-glutamyl-tRNA(Glu) + NADPH + H(+). Its pathway is porphyrin-containing compound metabolism; protoporphyrin-IX biosynthesis; 5-aminolevulinate from L-glutamyl-tRNA(Glu): step 1/2. In terms of biological role, catalyzes the NADPH-dependent reduction of glutamyl-tRNA(Glu) to glutamate 1-semialdehyde (GSA). In Acetivibrio thermocellus (strain ATCC 27405 / DSM 1237 / JCM 9322 / NBRC 103400 / NCIMB 10682 / NRRL B-4536 / VPI 7372) (Clostridium thermocellum), this protein is Glutamyl-tRNA reductase.